The sequence spans 455 residues: MIAHASRSLSIIGAGLAGSLLAILLSRQGWRITLYERRGDPRVADYESGRSINLALAERGRNALRQAGVEDEVMARAVMMRGRMVHPREGEPQLQRYGRDDSEVIWSIHRSDLNTTLLELAEQAGATVHFHRRLHTVDFDAGYARFIDDRDDSPHDIRFDTLIGADGAGSALRAAMNRRAPLGEDIAFLDHSYKELEIPPADDGSFRIERNALHIWPRGHYMCIALPNHEGTFTVTLFLPNQGDPSFATINTGAQAEALFAREFADTLPLIPNLRADWEQHPPGLLGTLTLDRWHQQGRAVLIGDAAHAMVPFHGQGMNCAFEDCVALARHLMEADDLEGAFAAFEAERKPNARAIQQMALENYLEMRDRVADPAFLLQRELEQELQRRWPTRFVPHYTMVTFLHTPYAEALRRTELQRDMLVAATTGHDSLDNIDWAALEAQIHAQLPVLEGAH.

The protein belongs to the aromatic-ring hydroxylase family. KMO subfamily. It depends on FAD as a cofactor.

It carries out the reaction L-kynurenine + NADPH + O2 + H(+) = 3-hydroxy-L-kynurenine + NADP(+) + H2O. It functions in the pathway cofactor biosynthesis; NAD(+) biosynthesis; quinolinate from L-kynurenine: step 1/3. In terms of biological role, catalyzes the hydroxylation of L-kynurenine (L-Kyn) to form 3-hydroxy-L-kynurenine (L-3OHKyn). Required for synthesis of quinolinic acid. The polypeptide is Kynurenine 3-monooxygenase (Stenotrophomonas maltophilia (strain K279a)).